Consider the following 227-residue polypeptide: UPF0758 protein lpl2409 (227 aa).

Residues 102 to 225 form the MPN domain; sequence RLSNTQQTYA…YSIFAENKWA (124 aa). Zn(2+) is bound by residues histidine 173, histidine 175, and aspartate 186. The JAMM motif motif lies at 173–186; the sequence is HNHPSGLSDASQQD.

Belongs to the UPF0758 family.

This chain is UPF0758 protein lpl2409, found in Legionella pneumophila (strain Lens).